We begin with the raw amino-acid sequence, 506 residues long: Cobyric acid synthase (506 aa).

Residues 251 to 448 (DITIAIVQLP…LHGLFDSDAF (198 aa)) form the GATase cobBQ-type domain. The Nucleophile role is filled by Cys-332. His-440 is a catalytic residue.

This sequence belongs to the CobB/CobQ family. CobQ subfamily.

The protein operates within cofactor biosynthesis; adenosylcobalamin biosynthesis. In terms of biological role, catalyzes amidations at positions B, D, E, and G on adenosylcobyrinic A,C-diamide. NH(2) groups are provided by glutamine, and one molecule of ATP is hydrogenolyzed for each amidation. The polypeptide is Cobyric acid synthase (Salmonella choleraesuis (strain SC-B67)).